We begin with the raw amino-acid sequence, 247 residues long: Serine protease 1 (247 aa).

The N-terminal stretch at 1–15 (MNPLLILTFVAAALA) is a signal peptide. The propeptide at 16-23 (APFDDDDK) is activation peptide. The Peptidase S1 domain maps to 24–244 (IVGGYNCEEN…YVKWIKNTIA (221 aa)). Disulfide bonds link Cys-30–Cys-160, Cys-48–Cys-64, Cys-139–Cys-206, Cys-171–Cys-185, and Cys-196–Cys-220. The active-site Charge relay system is the His-63. Residues Glu-75, Asn-77, Val-80, and Glu-85 each contribute to the Ca(2+) site. Asp-107 acts as the Charge relay system in catalysis. Tyr-154 is modified (sulfotyrosine). Ser-200 functions as the Charge relay system in the catalytic mechanism.

This sequence belongs to the peptidase S1 family. As to quaternary structure, interacts with SERPINA1. Ca(2+) serves as cofactor. In terms of processing, occurs in a single-chain form and a two-chain form, produced by proteolytic cleavage after Arg-122. Sulfation at Tyr-154 increases selectivity towards basic versus apolar residues at the P2' position of inhibitors that bind in a substrate-like fashion. Although the increase in selectivity is relatively small, it may facilitate digestion of a broader range of dietary proteins.

It is found in the secreted. It localises to the extracellular space. It carries out the reaction Preferential cleavage: Arg-|-Xaa, Lys-|-Xaa.. In terms of biological role, has activity against the synthetic substrates Boc-Phe-Ser-Arg-Mec, Boc-Leu-Thr-Arg-Mec, Boc-Gln-Ala-Arg-Mec and Boc-Val-Pro-Arg-Mec. The single-chain form is more active than the two-chain form against all of these substrates. The sequence is that of Serine protease 1 from Homo sapiens (Human).